The following is a 127-amino-acid chain: Small ribosomal subunit protein uS13 (127 aa).

Residues 97–127 form a disordered region; it reads PVRGQRTKTNARTRKGPRKTVAGKKGVKDLR. Positions 101 to 118 are enriched in basic residues; sequence QRTKTNARTRKGPRKTVA.

It belongs to the universal ribosomal protein uS13 family. In terms of assembly, part of the 30S ribosomal subunit. Forms a loose heterodimer with protein S19. Forms two bridges to the 50S subunit in the 70S ribosome.

In terms of biological role, located at the top of the head of the 30S subunit, it contacts several helices of the 16S rRNA. In the 70S ribosome it contacts the 23S rRNA (bridge B1a) and protein L5 of the 50S subunit (bridge B1b), connecting the 2 subunits; these bridges are implicated in subunit movement. Contacts the tRNAs in the A and P-sites. The polypeptide is Small ribosomal subunit protein uS13 (Rhodopirellula baltica (strain DSM 10527 / NCIMB 13988 / SH1)).